A 328-amino-acid polypeptide reads, in one-letter code: UPF0421 protein SAR1980 (328 aa).

Helical transmembrane passes span 19–39 (IAIF…IYAI), 61–81 (LPAT…FGDQ), 108–128 (VAVL…IFNF), and 132–152 (TLTA…VFPP).

Belongs to the UPF0421 family.

It localises to the cell membrane. The polypeptide is UPF0421 protein SAR1980 (Staphylococcus aureus (strain MRSA252)).